Here is a 378-residue protein sequence, read N- to C-terminus: Probable tRNA sulfurtransferase (378 aa).

Residues 51 to 153 form the THUMP domain; sequence DANLEKLQYV…SDKTYLFSKT (103 aa). Residues 171-172, 196-197, Arg-253, Gly-275, and Gln-284 each bind ATP; these read LM and SF.

It belongs to the ThiI family.

Its subcellular location is the cytoplasm. The catalysed reaction is [ThiI sulfur-carrier protein]-S-sulfanyl-L-cysteine + a uridine in tRNA + 2 reduced [2Fe-2S]-[ferredoxin] + ATP + H(+) = [ThiI sulfur-carrier protein]-L-cysteine + a 4-thiouridine in tRNA + 2 oxidized [2Fe-2S]-[ferredoxin] + AMP + diphosphate. It catalyses the reaction [ThiS sulfur-carrier protein]-C-terminal Gly-Gly-AMP + S-sulfanyl-L-cysteinyl-[cysteine desulfurase] + AH2 = [ThiS sulfur-carrier protein]-C-terminal-Gly-aminoethanethioate + L-cysteinyl-[cysteine desulfurase] + A + AMP + 2 H(+). Its pathway is cofactor biosynthesis; thiamine diphosphate biosynthesis. In terms of biological role, catalyzes the ATP-dependent transfer of a sulfur to tRNA to produce 4-thiouridine in position 8 of tRNAs, which functions as a near-UV photosensor. Also catalyzes the transfer of sulfur to the sulfur carrier protein ThiS, forming ThiS-thiocarboxylate. This is a step in the synthesis of thiazole, in the thiamine biosynthesis pathway. The sulfur is donated as persulfide by IscS. The chain is Probable tRNA sulfurtransferase from Mycoplasmopsis agalactiae (strain NCTC 10123 / CIP 59.7 / PG2) (Mycoplasma agalactiae).